We begin with the raw amino-acid sequence, 406 residues long: Eukaryotic initiation factor 4A-I (406 aa).

Positions 1–21 (MSASQDSRSRDNGPDGMEPEG) are disordered. S2 is subject to N-acetylserine. S4 is modified (phosphoserine). The Q motif motif lies at 32 to 60 (DSLDDMNLSESLLRGIYAYGFEKPSAIQQ). One can recognise a Helicase ATP-binding domain in the interval 63–234 (ILSCIKGYDV…KKFMRDPIRI (172 aa)). Position 76–83 (76–83 (AQSGTGKT)) interacts with ATP. K118 carries the post-translational modification N6-acetyllysine. Residue K146 forms a Glycyl lysine isopeptide (Lys-Gly) (interchain with G-Cter in SUMO2) linkage. T158 is modified (phosphothreonine). K174 carries the N6-acetyllysine modification. Residues 182 to 185 (DEAD) carry the DEAD box motif. K193 is subject to N6-acetyllysine. K225 participates in a covalent cross-link: Glycyl lysine isopeptide (Lys-Gly) (interchain with G-Cter in SUMO2). N6-acetyllysine; alternate is present on K238. Residue K238 forms a Glycyl lysine isopeptide (Lys-Gly) (interchain with G-Cter in SUMO2); alternate linkage. The region spanning 245–406 (GIRQFYINVE…EMPLNVADLI (162 aa)) is the Helicase C-terminal domain. Residues K309, K369, and K381 each participate in a glycyl lysine isopeptide (Lys-Gly) (interchain with G-Cter in SUMO2) cross-link.

It belongs to the DEAD box helicase family. eIF4A subfamily. EIF4F is a multi-subunit complex, the composition of which varies with external and internal environmental conditions. It is composed of at least EIF4A, EIF4E and EIF4G1/EIF4G3. Interacts with PAIP1, EIF4E and UPF2. Found in a complex with XPO7, EIF4A1, ARHGAP1, VPS26A, VPS29, VPS35 and SFN. May interact with NOM1. Interacts with PDCD4; this interferes with the interaction between EIF4A and EIF4G. Interacts with RBM4. Interacts with DDX3X in an RNA-independent manner. Interacts with PKP1 (via N-terminus); the interaction promotes EIF4A1 recruitment to the cap-dependent translation complex and EIF4A1 ATPase activity.

It is found in the cytoplasm. It localises to the perinuclear region. Its subcellular location is the cell membrane. The protein resides in the stress granule. The catalysed reaction is ATP + H2O = ADP + phosphate + H(+). Its function is as follows. ATP-dependent RNA helicase which is a subunit of the eIF4F complex involved in cap recognition and is required for mRNA binding to ribosome. In the current model of translation initiation, eIF4A unwinds RNA secondary structures in the 5'-UTR of mRNAs which is necessary to allow efficient binding of the small ribosomal subunit, and subsequent scanning for the initiator codon. As a result, promotes cell proliferation and growth. The protein is Eukaryotic initiation factor 4A-I (EIF4A1) of Pongo abelii (Sumatran orangutan).